The primary structure comprises 119 residues: Defensin-like protein 260 (119 aa).

An N-terminal signal peptide occupies residues M1 to S24. 4 disulfide bridges follow: C44–C99, C63–C79, C69–C83, and C73–C85.

Belongs to the DEFL family.

The protein localises to the secreted. In Arabidopsis thaliana (Mouse-ear cress), this protein is Defensin-like protein 260.